The sequence spans 100 residues: Urease subunit gamma (100 aa).

It belongs to the urease gamma subunit family. Heterotrimer of UreA (gamma), UreB (beta) and UreC (alpha) subunits. Three heterotrimers associate to form the active enzyme.

Its subcellular location is the cytoplasm. It carries out the reaction urea + 2 H2O + H(+) = hydrogencarbonate + 2 NH4(+). The protein operates within nitrogen metabolism; urea degradation; CO(2) and NH(3) from urea (urease route): step 1/1. This chain is Urease subunit gamma, found in Pseudomonas entomophila (strain L48).